A 653-amino-acid chain; its full sequence is Calpain-10 (653 aa).

Positions 13–321 constitute a Calpain catalytic domain; it reads LFRDAAFPAA…FDEITIGYPI (309 aa). Active-site residues include cysteine 73, histidine 238, and asparagine 263. 2 domain III regions span residues 322–494 and 513–653; these read TEAG…VSLS and EWGT…PSWQ.

It belongs to the peptidase C2 family.

In terms of biological role, calcium-regulated non-lysosomal thiol-protease which catalyzes limited proteolysis of substrates involved in cytoskeletal remodeling and signal transduction. May play a role in insulin-stimulated glucose uptake. This is Calpain-10 (CAPN10) from Macaca fascicularis (Crab-eating macaque).